A 212-amino-acid chain; its full sequence is UPF0111 protein PH1389 (212 aa).

This sequence belongs to the UPF0111 family.

The chain is UPF0111 protein PH1389 from Pyrococcus horikoshii (strain ATCC 700860 / DSM 12428 / JCM 9974 / NBRC 100139 / OT-3).